Reading from the N-terminus, the 76-residue chain is Translational regulator CsrA (76 aa).

This sequence belongs to the CsrA/RsmA family. As to quaternary structure, homodimer; the beta-strands of each monomer intercalate to form a hydrophobic core, while the alpha-helices form wings that extend away from the core.

Its subcellular location is the cytoplasm. Its function is as follows. A translational regulator that binds mRNA to regulate translation initiation and/or mRNA stability. Usually binds in the 5'-UTR at or near the Shine-Dalgarno sequence preventing ribosome-binding, thus repressing translation. Its main target seems to be the major flagellin gene, while its function is anatagonized by FliW. The sequence is that of Translational regulator CsrA from Helicobacter pylori (strain P12).